Here is a 547-residue protein sequence, read N- to C-terminus: Chaperonin GroEL (547 aa).

ATP contacts are provided by residues 30 to 33 (TLGP), Lys51, 87 to 91 (DGTTT), Gly414, 478 to 480 (NAA), and Asp494.

The protein belongs to the chaperonin (HSP60) family. Forms a cylinder of 14 subunits composed of two heptameric rings stacked back-to-back. Interacts with the co-chaperonin GroES.

The protein resides in the cytoplasm. The catalysed reaction is ATP + H2O + a folded polypeptide = ADP + phosphate + an unfolded polypeptide.. Its function is as follows. Together with its co-chaperonin GroES, plays an essential role in assisting protein folding. The GroEL-GroES system forms a nano-cage that allows encapsulation of the non-native substrate proteins and provides a physical environment optimized to promote and accelerate protein folding. This chain is Chaperonin GroEL, found in Klebsiella pneumoniae.